The following is a 370-amino-acid chain: Sphingolipid delta(4)-desaturase (370 aa).

A run of 3 helical transmembrane segments spans residues 68-88 (VMGV…TPVF), 92-112 (FLTL…LAIH), and 128-148 (LFAV…FQPY). Positions 112–116 (HELSH) match the Histidine box-1 motif. A Histidine box-2 motif is present at residues 149–153 (HQLHH). Transmembrane regions (helical) follow at residues 173–193 (FLSS…FYAL), 197–217 (FITQ…QLIF), and 220–240 (VMVT…TFLA). The Histidine box-3 signature appears at 299–303 (HNEHH).

Belongs to the fatty acid desaturase type 1 family. DEGS subfamily.

It localises to the membrane. It catalyses the reaction an N-acylsphinganine + 2 Fe(II)-[cytochrome b5] + O2 + 2 H(+) = an N-acylsphing-4-enine + 2 Fe(III)-[cytochrome b5] + 2 H2O. It participates in lipid metabolism; sphingolipid metabolism. Its function is as follows. Delta(4)-fatty-acid desaturase which introduces a double bond at the 4-position in the long-chain base (LCB) of ceramides. Required for the formation of the monounsaturated sphingoid base (E)-sphing-4-enine during glucosylceramide (GluCer) biosynthesis. In Candida albicans (strain SC5314 / ATCC MYA-2876) (Yeast), this protein is Sphingolipid delta(4)-desaturase.